We begin with the raw amino-acid sequence, 232 residues long: Fibrillarin-like rRNA/tRNA 2'-O-methyltransferase (232 aa).

S-adenosyl-L-methionine is bound by residues 89 to 90 (TT), 108 to 109 (EF), 133 to 134 (DA), and 153 to 156 (DIAQ).

It belongs to the methyltransferase superfamily. Fibrillarin family. Interacts with nop5. Component of box C/D small ribonucleoprotein (sRNP) particles that contain rpl7ae, FlpA and nop5, plus a guide RNA. These sRNP particles form homodimers, giving rise to an asymmetric holoenzyme.

Involved in pre-rRNA and tRNA processing. Utilizes the methyl donor S-adenosyl-L-methionine to catalyze the site-specific 2'-hydroxyl methylation of ribose moieties in rRNA and tRNA. Site specificity is provided by a guide RNA that base pairs with the substrate. Methylation occurs at a characteristic distance from the sequence involved in base pairing with the guide RNA. This Saccharolobus solfataricus (strain ATCC 35092 / DSM 1617 / JCM 11322 / P2) (Sulfolobus solfataricus) protein is Fibrillarin-like rRNA/tRNA 2'-O-methyltransferase.